Here is a 118-residue protein sequence, read N- to C-terminus: Nucleoid-associated protein TM_0687 (118 aa).

This sequence belongs to the YbaB/EbfC family. As to quaternary structure, homodimer.

It localises to the cytoplasm. The protein resides in the nucleoid. Functionally, binds to DNA and alters its conformation. May be involved in regulation of gene expression, nucleoid organization and DNA protection. This is Nucleoid-associated protein TM_0687 from Thermotoga maritima (strain ATCC 43589 / DSM 3109 / JCM 10099 / NBRC 100826 / MSB8).